The following is a 603-amino-acid chain: Aspartate--tRNA(Asp/Asn) ligase (603 aa).

Residues 205–208 (QLFK) form an aspartate region. Arginine 227 contributes to the L-aspartate binding site. Residues 227-229 (RDE) and glutamine 236 each bind ATP. Position 463 (histidine 463) interacts with L-aspartate. Glutamate 497 lines the ATP pocket. Arginine 504 contributes to the L-aspartate binding site. ATP is bound at residue 549-552 (GMDR).

The protein belongs to the class-II aminoacyl-tRNA synthetase family. Type 1 subfamily. In terms of assembly, homodimer.

It localises to the cytoplasm. It carries out the reaction tRNA(Asx) + L-aspartate + ATP = L-aspartyl-tRNA(Asx) + AMP + diphosphate. Functionally, aspartyl-tRNA synthetase with relaxed tRNA specificity since it is able to aspartylate not only its cognate tRNA(Asp) but also tRNA(Asn). Reaction proceeds in two steps: L-aspartate is first activated by ATP to form Asp-AMP and then transferred to the acceptor end of tRNA(Asp/Asn). The polypeptide is Aspartate--tRNA(Asp/Asn) ligase (Anaeromyxobacter dehalogenans (strain 2CP-1 / ATCC BAA-258)).